The chain runs to 154 residues: MSNQMNTMDITEILKYLPHRYPFLLIDRVLDYTPGESLHAIKNVSINEPFFQGHFPIQPVMPGVLILEAMAQATGLLAFKTMSNDVPPPGVLYYFAGIDNARFRRVVVPGDQIHFEVKMIKERRGIGVFYGEARVDGEVACSAEIMCARREINQ.

The active site involves histidine 54.

The protein belongs to the thioester dehydratase family. FabZ subfamily.

Its subcellular location is the cytoplasm. The catalysed reaction is a (3R)-hydroxyacyl-[ACP] = a (2E)-enoyl-[ACP] + H2O. Its function is as follows. Involved in unsaturated fatty acids biosynthesis. Catalyzes the dehydration of short chain beta-hydroxyacyl-ACPs and long chain saturated and unsaturated beta-hydroxyacyl-ACPs. The sequence is that of 3-hydroxyacyl-[acyl-carrier-protein] dehydratase FabZ from Shewanella putrefaciens (strain CN-32 / ATCC BAA-453).